The following is a 180-amino-acid chain: MDQKPLGLLTIHVKRGINLAIRDHRSSDPYIVLNVADQTLKTRVVKKNCNPVWNEEMTVAIKDPNVPIRLTVFDWDKFTGDDKMGDANIDIQPYLEALKMGMELLRLPNGCAIKRVQPSRHNCLSDESSIVWNNGKITQDLILRLNNVECGEIEIMLEWHEGAGCRGITSSSKGGGSSST.

The 105-residue stretch at methionine 1 to leucine 105 folds into the C2 domain. Ca(2+) is bound by residues arginine 22, aspartate 23, aspartate 28, aspartate 74, tryptophan 75, aspartate 76, and aspartate 82.

This sequence belongs to the plant CAR protein family. As to quaternary structure, binds to PYR/PYL/RCAR abscisic acid intracellular receptors in an ABA-independent manner, both at the plasma membrane and in the nucleus.

Its subcellular location is the cell membrane. It localises to the nucleus. Its function is as follows. Stimulates the GTPase/ATPase activities of Obg-like ATPases. Mediates the transient calcium-dependent interaction of PYR/PYL/RCAR abscisic acid (ABA) receptors with the plasma membrane and thus regulates ABA sensitivity. This is Protein C2-DOMAIN ABA-RELATED 10 from Arabidopsis thaliana (Mouse-ear cress).